The following is a 201-amino-acid chain: Recombination protein RecR (201 aa).

The segment at 60 to 75 adopts a C4-type zinc-finger fold; it reads CSVCGNVDTIDPCSIC. The 96-residue stretch at 83–178 folds into the Toprim domain; that stretch reads ATIIVVEDIA…KVTRLAHGVP (96 aa).

The protein belongs to the RecR family.

Functionally, may play a role in DNA repair. It seems to be involved in an RecBC-independent recombinational process of DNA repair. It may act with RecF and RecO. The sequence is that of Recombination protein RecR from Bartonella henselae (strain ATCC 49882 / DSM 28221 / CCUG 30454 / Houston 1) (Rochalimaea henselae).